A 617-amino-acid chain; its full sequence is Proline--tRNA ligase (617 aa).

The protein belongs to the class-II aminoacyl-tRNA synthetase family. ProS type 1 subfamily. As to quaternary structure, homodimer.

The protein resides in the cytoplasm. It catalyses the reaction tRNA(Pro) + L-proline + ATP = L-prolyl-tRNA(Pro) + AMP + diphosphate. Its function is as follows. Catalyzes the attachment of proline to tRNA(Pro) in a two-step reaction: proline is first activated by ATP to form Pro-AMP and then transferred to the acceptor end of tRNA(Pro). As ProRS can inadvertently accommodate and process non-cognate amino acids such as alanine and cysteine, to avoid such errors it has two additional distinct editing activities against alanine. One activity is designated as 'pretransfer' editing and involves the tRNA(Pro)-independent hydrolysis of activated Ala-AMP. The other activity is designated 'posttransfer' editing and involves deacylation of mischarged Ala-tRNA(Pro). The misacylated Cys-tRNA(Pro) is not edited by ProRS. This chain is Proline--tRNA ligase, found in Streptococcus agalactiae serotype Ia (strain ATCC 27591 / A909 / CDC SS700).